The chain runs to 1360 residues: S-layer protein A (1360 aa).

The signal sequence occupies residues 1 to 24 (MNKSAIRYLSLLLVFLMGGSFLAG).

The protein belongs to the Sulfolobales SlaA family. The mushroom-shaped unit cells of the Sulfolobales' S-layers may consist of three SlaB subunits and six SlaA subunits.

The protein resides in the secreted. Its subcellular location is the cell wall. It is found in the S-layer. Its function is as follows. S-layer large protein. May form the highly ordered outer sheath. This Metallosphaera sedula (strain ATCC 51363 / DSM 5348 / JCM 9185 / NBRC 15509 / TH2) protein is S-layer protein A.